The primary structure comprises 116 residues: Ig heavy chain V region 3-6 (116 aa).

Positions 1-18 are cleaved as a signal peptide; sequence MKVLSLLYLLTAIPGILS. The segment at 19–48 is framework-1; sequence DVQLQESGPGLVKPSQSLSLTCSVTGYSIT. Cys-40 and Cys-114 form a disulfide bridge. The complementarity-determining-1 stretch occupies residues 49–53; sequence SGYYW. The tract at residues 54 to 67 is framework-2; it reads NWIRQFPGNKLEWM. Residues 68–84 are complementarity-determining-2; the sequence is GYISYDGSNNYNPSLKN. The interval 85–116 is framework-3; that stretch reads RISITRDTSKNQFFLKLNSVTTEDTATYYCAR.

In Mus musculus (Mouse), this protein is Ig heavy chain V region 3-6 (Ighv3-6).